A 91-amino-acid polypeptide reads, in one-letter code: Putative antitoxin YutD (91 aa).

Cysteine 77 and cysteine 81 are oxidised to a cystine.

As to quaternary structure, homodimer, probably forms a complex with cognate toxin YutE.

Functionally, probable antitoxin component of a putative type VII toxin-antitoxin (TA) system. Probably neutralizes cognate toxin YutE. The polypeptide is Putative antitoxin YutD (yutD) (Bacillus subtilis (strain 168)).